The chain runs to 114 residues: Protein ORF3 (114 aa).

2 hydrophobic regions span residues 6-22 (CALGLFCCCSSCFCLCC) and 33-53 (AVVGGAAAVPAVVSGVTGLIL). The interval 28 to 68 (VSRLAAVVGGAAAVPAVVSGVTGLILSPSQSPIFIQPTPLP) is interaction with host HPX. The homodimerization, and interaction with host AMBP/bikunin stretch occupies residues 72–114 (PLRPGLDLAFANQPGHLAPLGEIRPSAPPLPPVADLPQPGLRR). The tract at residues 91–114 (LGEIRPSAPPLPPVADLPQPGLRR) is disordered. The segment at 95–104 (RPSAPPLPPV) is interaction with host SRC, HCK, FYN, PIK3R3 and GRB2. Positions 96 to 99 (PSAP) match the PTAP/PSAP motif motif.

Belongs to the hepevirus ORF3 protein family. As to quaternary structure, forms homooligomers. Interacts with host SRC, HCK, FYN, PIK3R3 and GRB2 (via SH3 domain); binding does not activate the kinases. Interacts with host AMBP/bikunin and AMBP/alpha-1-microglobulin peptides. Interacts with host HPX/hemopexin. Interacts (when phosphorylated) with capsid protein ORF2. Interacts with host TSG101; this interaction plays a role in viral release from the host cell. Interacts with host SIRPA; this interaction down-regulates the phosphorylation of host IRF3. Palmitoylated in the N-terminus.

It localises to the host endoplasmic reticulum membrane. Its subcellular location is the host cytoplasm. It is found in the host cytoskeleton. The protein resides in the virion. The protein localises to the host cell membrane. In terms of biological role, small multifunctional phosphoprotein involved in virion morphogenesis, egress and counteracting host innate immunity. Plays critical roles in the final steps of viral release by interacting with host TSG101, a member of the vacuolar protein-sorting pathway and using other cellular host proteins involved in vesicle formation pathway. Also acts as a viroporin and forms ion conductive pores allowing viral particle release. Impairs the generation of type I interferon by down-regulating host TLR3 and TLR7 as well as their downstream signaling pathways. Down-regulates the phosphorylation of host IRF3 via the interaction with host SIRP-alpha, thereby inhibiting IFN-I expression. Interacts with host microtubules. The protein is Protein ORF3 of Hepatitis E virus genotype 2 (isolate Human/Mexico) (HEV-2).